Reading from the N-terminus, the 230-residue chain is Mitochondrial fission factor homolog B (230 aa).

The Cytoplasmic segment spans residues 1-210 (MSGAAFPSPT…ENKERAKREM (210 aa)). Positions 117 to 153 (EQTSSVSHPSEEVRTQTKTRRERSVSENAGVHHNGPL) are disordered. A Phosphoserine modification is found at Ser142. Residues 179-210 (VDATSLRRQIVKLNRRLQLLEEENKERAKREM) adopt a coiled-coil conformation. The chain crosses the membrane as a helical; Anchor for type IV membrane protein span at residues 211–228 (VMYSITVAFWLVNSWVWF). The Extracellular portion of the chain corresponds to 229 to 230 (RR).

Belongs to the Tango11 family.

It is found in the mitochondrion outer membrane. It localises to the peroxisome. Plays a role in mitochondrial and peroxisomal fission. Promotes the recruitment and association of the fission mediator dynamin-related protein 1 (DNM1L) to the mitochondrial surface. The sequence is that of Mitochondrial fission factor homolog B from Danio rerio (Zebrafish).